Here is a 548-residue protein sequence, read N- to C-terminus: Thermosome subunit beta (548 aa).

The protein belongs to the TCP-1 chaperonin family. Forms a Heterooligomeric complex of two stacked eight-membered rings.

In terms of biological role, molecular chaperone; binds unfolded polypeptides in vitro, and has a weak ATPase activity. The protein is Thermosome subunit beta (thsB) of Aeropyrum pernix (strain ATCC 700893 / DSM 11879 / JCM 9820 / NBRC 100138 / K1).